The sequence spans 178 residues: MTMFKKISVLFFTLILAGCSSWSSVTNYIPFMGNDKKVIDLDKDKIDQKSYAAAYEATVATYKGRVNENFFVDNFASGANDWYLGRILVPVKQIQDKLYTGGHDSDVYAYYSGVLHAEALQANLKRLSANCWEKVDSQSMAQGIYDAMRDLQKGEARGENDEYIVQGSEALLKACTSK.

Positions 1–23 are cleaved as a signal peptide; sequence MTMFKKISVLFFTLILAGCSSWS.

This is an uncharacterized protein from Haemophilus influenzae (strain ATCC 51907 / DSM 11121 / KW20 / Rd).